A 494-amino-acid polypeptide reads, in one-letter code: Protein nucleotidyltransferase YdiU (494 aa).

Residues G90, G92, R93, K113, D125, G126, R176, and R183 each contribute to the ATP site. D252 functions as the Proton acceptor in the catalytic mechanism. Mg(2+) is bound by residues N253 and D262. D262 is a binding site for ATP.

This sequence belongs to the SELO family. Mg(2+) serves as cofactor. Mn(2+) is required as a cofactor.

The enzyme catalyses L-seryl-[protein] + ATP = 3-O-(5'-adenylyl)-L-seryl-[protein] + diphosphate. It catalyses the reaction L-threonyl-[protein] + ATP = 3-O-(5'-adenylyl)-L-threonyl-[protein] + diphosphate. The catalysed reaction is L-tyrosyl-[protein] + ATP = O-(5'-adenylyl)-L-tyrosyl-[protein] + diphosphate. It carries out the reaction L-histidyl-[protein] + UTP = N(tele)-(5'-uridylyl)-L-histidyl-[protein] + diphosphate. The enzyme catalyses L-seryl-[protein] + UTP = O-(5'-uridylyl)-L-seryl-[protein] + diphosphate. It catalyses the reaction L-tyrosyl-[protein] + UTP = O-(5'-uridylyl)-L-tyrosyl-[protein] + diphosphate. Nucleotidyltransferase involved in the post-translational modification of proteins. It can catalyze the addition of adenosine monophosphate (AMP) or uridine monophosphate (UMP) to a protein, resulting in modifications known as AMPylation and UMPylation. The sequence is that of Protein nucleotidyltransferase YdiU from Alkalilimnicola ehrlichii (strain ATCC BAA-1101 / DSM 17681 / MLHE-1).